A 99-amino-acid chain; its full sequence is Small ribosomal subunit protein uS14m (99 aa).

This sequence belongs to the universal ribosomal protein uS14 family.

The protein resides in the mitochondrion. The polypeptide is Small ribosomal subunit protein uS14m (RPS14) (Marchantia polymorpha (Common liverwort)).